Reading from the N-terminus, the 200-residue chain is H-2 class I histocompatibility antigen, Q9 alpha chain (200 aa).

Residues 1-21 form the signal peptide; the sequence is MALTMLLLLVAAALTLIETRA. The tract at residues 22–111 is alpha-1; sequence GQHSLQYFHT…AQSYYNQSKG (90 aa). Residues 22–200 lie on the Extracellular side of the membrane; it reads GQHSLQYFHT…RYLELGKETL (179 aa). N-linked (GlcNAc...) asparagine glycosylation occurs at asparagine 107. Residues 112–200 form an alpha-2 region; the sequence is GSHTLQWMYG…RYLELGKETL (89 aa). Cysteines 122 and 185 form a disulfide.

This sequence belongs to the MHC class I family. In terms of assembly, heterodimer of an alpha chain and a beta chain (beta-2-microglobulin).

It localises to the membrane. In terms of biological role, involved in the presentation of foreign antigens to the immune system. The sequence is that of H-2 class I histocompatibility antigen, Q9 alpha chain (H2-Q9) from Mus musculus (Mouse).